The chain runs to 304 residues: tRNA pseudouridine synthase B (304 aa).

The Nucleophile role is filled by aspartate 38.

It belongs to the pseudouridine synthase TruB family. Type 1 subfamily.

The enzyme catalyses uridine(55) in tRNA = pseudouridine(55) in tRNA. Functionally, responsible for synthesis of pseudouridine from uracil-55 in the psi GC loop of transfer RNAs. This Listeria innocua serovar 6a (strain ATCC BAA-680 / CLIP 11262) protein is tRNA pseudouridine synthase B.